We begin with the raw amino-acid sequence, 260 residues long: Sodium channel modifier 1 (260 aa).

The short motif at Lys4–Arg20 is the Bipartite nuclear localization signal element. The Matrin-type zinc-finger motif lies at Tyr42–Arg74. Positions Arg143 to Ser260 are disordered. The span at Pro166 to Thr187 shows a compositional bias: polar residues. The span at Lys202–Glu221 shows a compositional bias: basic and acidic residues. Acidic residues predominate over residues Val245–Pro254.

In terms of assembly, component of the minor spliceosome, which splices U12-type introns.

It is found in the nucleus. Its subcellular location is the nucleoplasm. The protein resides in the nucleus speckle. In terms of biological role, as a component of the minor spliceosome, involved in the splicing of U12-type introns in pre-mRNAs. This is Sodium channel modifier 1 (scnm1) from Xenopus laevis (African clawed frog).